The primary structure comprises 218 residues: Capsid protein (218 aa).

The residue at position 1 (Met1) is an N-acetylmethionine; by host. Residues 1–30 (MDKSESTSAGRNRRRRPRRGSRSAPSSSDA) are disordered. Over residues 11–21 (RNRRRRPRRGS) the composition is skewed to basic residues.

This sequence belongs to the cucumovirus capsid protein family.

Its subcellular location is the virion. In terms of biological role, capsid protein. Probably binds RNA and plays a role in packaging. The polypeptide is Capsid protein (Cucumis sativus (Cucumber)).